The primary structure comprises 346 residues: tRNA N6-adenosine threonylcarbamoyltransferase (346 aa).

Residues histidine 111 and histidine 115 each coordinate Fe cation. Substrate is bound by residues 134–138, aspartate 167, glycine 180, and asparagine 279; that span reads LVSGG. Aspartate 307 contributes to the Fe cation binding site.

The protein belongs to the KAE1 / TsaD family. It depends on Fe(2+) as a cofactor.

It is found in the cytoplasm. It carries out the reaction L-threonylcarbamoyladenylate + adenosine(37) in tRNA = N(6)-L-threonylcarbamoyladenosine(37) in tRNA + AMP + H(+). Functionally, required for the formation of a threonylcarbamoyl group on adenosine at position 37 (t(6)A37) in tRNAs that read codons beginning with adenine. Is involved in the transfer of the threonylcarbamoyl moiety of threonylcarbamoyl-AMP (TC-AMP) to the N6 group of A37, together with TsaE and TsaB. TsaD likely plays a direct catalytic role in this reaction. The sequence is that of tRNA N6-adenosine threonylcarbamoyltransferase from Burkholderia ambifaria (strain ATCC BAA-244 / DSM 16087 / CCUG 44356 / LMG 19182 / AMMD) (Burkholderia cepacia (strain AMMD)).